The primary structure comprises 83 residues: Hainantoxin-III 4 (83 aa).

Residues 1-21 (MKASMYLALAGLVLLFVVGYA) form the signal peptide. Positions 22–48 (SESEEKEFPRELLSKIFAVDDFKGKER) are excised as a propeptide. 3 cysteine pairs are disulfide-bonded: Cys50–Cys65, Cys57–Cys70, and Cys64–Cys77. Leu81 carries the leucine amide modification.

This sequence belongs to the neurotoxin 10 (Hwtx-1) family. 15 (Hntx-3) subfamily. Monomer. As to expression, expressed by the venom gland.

The protein localises to the secreted. In terms of biological role, selective antagonist of neuronal tetrodotoxin (TTX)-sensitive voltage-gated sodium channels (IC(50)=1270 nM on Nav1.1/SCN1A, 270 nM on Nav1.2/SCN2A, 491 nM on Nav1.3/SCN3A and 232 nM on Nav1.7/SCN9A). This toxin suppress Nav1.7 current amplitude without significantly altering the activation, inactivation, and repriming kinetics. Short extreme depolarizations partially activate the toxin-bound channel, indicating voltage-dependent inhibition of this toxin. This toxin increases the deactivation of the Nav1.7 current after extreme depolarizations. The toxin-Nav1.7 complex is gradually dissociated upon prolonged strong depolarizations in a voltage-dependent manner, and the unbound toxin rebinds to Nav1.7 after a long repolarization. Moreover, analysis of chimeric channels showed that the DIIS3-S4 linker is critical for toxin binding to Nav1.7. These data are consistent with this toxin interacting with Nav1.7 site 4 and trapping the domain II voltage sensor in the closed state. The polypeptide is Hainantoxin-III 4 (Cyriopagopus hainanus (Chinese bird spider)).